We begin with the raw amino-acid sequence, 160 residues long: Ribosome maturation factor RimP (160 aa).

The protein belongs to the RimP family.

Its subcellular location is the cytoplasm. In terms of biological role, required for maturation of 30S ribosomal subunits. The polypeptide is Ribosome maturation factor RimP (Cronobacter sakazakii (strain ATCC BAA-894) (Enterobacter sakazakii)).